A 313-amino-acid polypeptide reads, in one-letter code: Protein YABBY 3 (313 aa).

A C4-type zinc finger spans residues cysteine 65–cysteine 92. Disordered regions lie at residues threonine 107 to aspartate 149 and asparagine 180 to arginine 221. Residues alanine 112 to alanine 128 show a composition bias toward pro residues.

This sequence belongs to the YABBY family. In terms of tissue distribution, expressed in shoot apex and young inflorescences.

The protein resides in the nucleus. The chain is Protein YABBY 3 (YAB3) from Oryza sativa subsp. japonica (Rice).